The chain runs to 685 residues: Eukaryotic peptide chain release factor GTP-binding subunit (685 aa).

Disordered stretches follow at residues 1–34, 63–99, and 112–234; these read MSDSNQGNNQQNYQQYSQNGNQQQGNNRYQGYQA, YNPDAGYQQQYNPQGGYQQYNPQGGYQQQFNPQGGRG, and GYQA…NVTS. N-acetylserine is present on Ser2. Residues 2–239 are interaction with PAB1; that stretch reads SDSNQGNNQQ…ANVTSADALI (238 aa). Positions 5-135 are prion domain (PrD); sequence NQGNNQQNYQ…LNDFQKQQKQ (131 aa). Residues 117–129 show a composition bias toward polar residues; it reads FQPQSQGMSLNDF. The tract at residues 139–249 is charged; sequence KPKKTLKLVS…KEQEEEVDDE (111 aa). Residues 166–222 show a composition bias toward basic and acidic residues; it reads AESDKKEEEKSAETKEPTKEPTKVEEPVKKEEKPVQTEEKTEEKSELPKVEDLKISE. Residues 223–234 show a composition bias toward polar residues; the sequence is STHNTNNANVTS. Residues 258 to 484 enclose the tr-type G domain; sequence KDHVSLIFMG…YLDTMNHVDR (227 aa). The segment at 267-274 is G1; that stretch reads GHVDAGKS. 267–274 serves as a coordination point for GTP; that stretch reads GHVDAGKS. The segment at 323–327 is G2; sequence GKTIE. The interval 344 to 347 is G3; sequence DAPG. Residues 406–409 and 449–450 contribute to the GTP site; these read NKMD and GY. The segment at 406 to 409 is G4; it reads NKMD. A G5 region spans residues 448–450; sequence SGY. A Phosphoserine modification is found at Ser571.

It belongs to the TRAFAC class translation factor GTPase superfamily. Classic translation factor GTPase family. ERF3 subfamily. In terms of assembly, heterodimer of two subunits, one of which binds GTP. Interacts with polyadenylate-binding protein PAB1, and TPA1.

The protein localises to the cytoplasm. It catalyses the reaction GTP + H2O = GDP + phosphate + H(+). GTPase component of the eRF1-eRF3-GTP ternary complex, a ternary complex that mediates translation termination in response to the termination codons UAA, UAG and UGA. SUP35/eRF3 mediates SUP45/eRF1 delivery to stop codons: The eRF1-eRF3-GTP complex binds to a stop codon in the ribosomal A-site. GTP hydrolysis by SUP35/eRF3 induces a conformational change that leads to its dissociation, permitting SUP45/eRF1 to accommodate fully in the A-site. Recruited by polyadenylate-binding protein PAB1 to poly(A)-tails of mRNAs. Interaction with PAB1 is also required for regulation of normal mRNA decay through translation termination-coupled poly(A) shortening. The protein is Eukaryotic peptide chain release factor GTP-binding subunit (SUP35) of Saccharomyces cerevisiae (strain ATCC 204508 / S288c) (Baker's yeast).